A 740-amino-acid chain; its full sequence is NAD(P)H-quinone oxidoreductase subunit 5, chloroplastic (740 aa).

The next 16 membrane-spanning stretches (helical) occupy residues 9–29 (WIIPFIPLPVPMLIGAGLILF), 40–60 (WAFQSVLLLSIVMIFSIYLSI), 89–109 (IDPLTSIMSILITTVGIMVLI), 125–145 (FAYMSFFSTSMLGLVTSSNLI), 147–167 (IYIFWELVGLCSYLLIGFWFT), 185–205 (GDFGLLLGILGFYWITGSFEF), 219–239 (NEVNFLFVTLCAVLLFAGAVS), 258–278 (TPISALIHAATMVAAGIFLVA), 286–306 (VIPYIMYLISVIGIITVLLGA), 327–347 (LGYMMLALGMGSYRSALFHLI), 354–374 (ALLFLGSGSIIHSMETIVGYS), 396–416 (ITFLLGTLSLCGIPPLACFWS), 425–445 (WLYSPIFAIIAWATAGLTAFY), 543–563 (LFPIFVLGLFTLFVGAIGIPF), 602–622 (VVSVSIAYFGIFIASFLYKPV), and 717–737 (SYLFLYLAYVSVFLLVYYLLF).

Belongs to the complex I subunit 5 family. In terms of assembly, NDH is composed of at least 16 different subunits, 5 of which are encoded in the nucleus.

The protein resides in the plastid. It localises to the chloroplast thylakoid membrane. It carries out the reaction a plastoquinone + NADH + (n+1) H(+)(in) = a plastoquinol + NAD(+) + n H(+)(out). It catalyses the reaction a plastoquinone + NADPH + (n+1) H(+)(in) = a plastoquinol + NADP(+) + n H(+)(out). In terms of biological role, NDH shuttles electrons from NAD(P)H:plastoquinone, via FMN and iron-sulfur (Fe-S) centers, to quinones in the photosynthetic chain and possibly in a chloroplast respiratory chain. The immediate electron acceptor for the enzyme in this species is believed to be plastoquinone. Couples the redox reaction to proton translocation, and thus conserves the redox energy in a proton gradient. The polypeptide is NAD(P)H-quinone oxidoreductase subunit 5, chloroplastic (ndhF) (Solanum bulbocastanum (Wild potato)).